The chain runs to 1178 residues: Tricalbin-2 (1178 aa).

The span at 1-17 (MSPNSSKTRTDQISSMP) shows a compositional bias: polar residues. Residues 1-27 (MSPNSSKTRTDQISSMPGINEATKVES) form a disordered region. Topologically, residues 1–98 (MSPNSSKTRT…NLLPDKFYGD (98 aa)) are cytoplasmic. A helical membrane pass occupies residues 99-119 (WYHEVAILIIAGLCSFVLGYF). A topological domain (extracellular) is located at residue lysine 120. Residues 121-141 (FSLASVLIVMLTTGMLYRTSS) traverse the membrane as a helical segment. At 142 to 1178 (KKYRESLRDL…TGDKKSEEKQ (1037 aa)) the chain is on the cytoplasmic side. An SMP-LTD domain is found at 164–367 (DYESVEWLNT…PPFSLQLNIP (204 aa)). C2 domains follow at residues 358–481 (PPFS…EKVH), 504–628 (PKKL…LKVT), and 632–749 (RPVD…DKYT). Positions 784-821 (LSLEEAKEVDEINEKKDKLEKQKSTLDDKNISKEEKER) form a coiled coil. Residues 962–1086 (QVSWFPVTAT…DPESDTTFNI (125 aa)) enclose the C2 4 domain. Serine 991 is modified (phosphoserine).

This sequence belongs to the tricalbin family. Interacts with TCB1 and TCB3 via its C-terminal domain.

The protein resides in the cell membrane. It localises to the endoplasmic reticulum membrane. In terms of biological role, may play a role in membrane trafficking. The chain is Tricalbin-2 (TCB2) from Saccharomyces cerevisiae (strain ATCC 204508 / S288c) (Baker's yeast).